Consider the following 397-residue polypeptide: MARHLFTSESVTEGHPDKICDQISDSILDALLEKDPQSRVACETTVTTGLVLVAGEISTSAYVDIPKLVRETVREIGYTRAKYGFDCDTCAVITSIDEQSGDIAMGVDEGLESKTGEEIEEEIEKVGAGDQGIMFGFACNETPELMPLPISLAHKLSRRLTEVRKTGLVDYLRPDGKTQVTVEYEGSKAVRVHTVLISAQHCETVSNDKIREDLINHVIKEVIPAELLDEETKIYINPTGRFVIGGPQGDTGLTGRKIIIDTYGGYSRHGGGAFSGKDPTKVDRSAAYAARYVAKNIVAAGLADKCEIELAYAIGIARPLSIFIDTFGTGKVSEEKLVELVNKHFDLRPGAIIRDLDLRKPLYKKVAAYGHFGRTDIDLPWERTDKVEQLRKDALGE.

Residue His15 participates in ATP binding. Mg(2+) is bound at residue Asp17. Glu43 contacts K(+). Glu56 and Gln99 together coordinate L-methionine. The interval Gln99–Glu109 is flexible loop. ATP-binding positions include Asp175–Lys177, Arg241–Phe242, Asp250, Arg256–Lys257, Ala273, and Lys277. Asp250 serves as a coordination point for L-methionine. Residue Lys281 participates in L-methionine binding.

Belongs to the AdoMet synthase family. Homotetramer; dimer of dimers. Requires Mg(2+) as cofactor. K(+) is required as a cofactor.

The protein resides in the cytoplasm. The catalysed reaction is L-methionine + ATP + H2O = S-adenosyl-L-methionine + phosphate + diphosphate. The protein operates within amino-acid biosynthesis; S-adenosyl-L-methionine biosynthesis; S-adenosyl-L-methionine from L-methionine: step 1/1. Functionally, catalyzes the formation of S-adenosylmethionine (AdoMet) from methionine and ATP. The overall synthetic reaction is composed of two sequential steps, AdoMet formation and the subsequent tripolyphosphate hydrolysis which occurs prior to release of AdoMet from the enzyme. This is S-adenosylmethionine synthase from Clostridioides difficile (strain 630) (Peptoclostridium difficile).